Here is a 392-residue protein sequence, read N- to C-terminus: Integrin-linked kinase-associated serine/threonine phosphatase 2C (392 aa).

N-acetylmethionine is present on methionine 1. Positions 1-91 (MDLFGDLPEP…PEEEKNGGEE (91 aa)) are disordered. Low complexity predominate over residues 31 to 40 (DLPPTSSTDS). The segment covering 59-70 (SGSLATSGSQVV) has biased composition (polar residues). The span at 72–91 (NEGKGAKRKAPEEEKNGGEE) shows a compositional bias: basic and acidic residues. Residues 108–390 (KGYVAERKGE…DNVTVMVVRI (283 aa)) form the PPM-type phosphatase domain. Mn(2+)-binding residues include aspartate 152 and glycine 153. N6-acetyllysine is present on lysine 210. Positions 326 and 381 each coordinate Mn(2+).

Belongs to the PP2C family. In terms of assembly, interacts with ILK. Requires Mg(2+) as cofactor. The cofactor is Mn(2+). In terms of tissue distribution, widely expressed. Highest expression observed in kidney, liver and muscle.

It localises to the cytoplasm. It carries out the reaction O-phospho-L-seryl-[protein] + H2O = L-seryl-[protein] + phosphate. The catalysed reaction is O-phospho-L-threonyl-[protein] + H2O = L-threonyl-[protein] + phosphate. In terms of biological role, protein phosphatase that may play a role in regulation of cell cycle progression via dephosphorylation of its substrates whose appropriate phosphorylation states might be crucial for cell proliferation. Selectively associates with integrin linked kinase (ILK), to modulate cell adhesion and growth factor signaling. Inhibits the ILK-GSK3B signaling axis and may play an important role in inhibiting oncogenic transformation. In Rattus norvegicus (Rat), this protein is Integrin-linked kinase-associated serine/threonine phosphatase 2C (Ilkap).